A 391-amino-acid polypeptide reads, in one-letter code: Formate-dependent phosphoribosylglycinamide formyltransferase (391 aa).

N(1)-(5-phospho-beta-D-ribosyl)glycinamide contacts are provided by residues 20–21 (EL) and Glu80. ATP-binding positions include Arg112, Lys153, 158–163 (SSGKGQ), 193–196 (EGFI), and Glu201. Residues 117 to 306 (RLAAETLGLP…EFALHVRAIL (190 aa)) form the ATP-grasp domain. Glu265 and Glu277 together coordinate Mg(2+). N(1)-(5-phospho-beta-D-ribosyl)glycinamide contacts are provided by residues Asp284, Lys354, and 361-362 (RR).

This sequence belongs to the PurK/PurT family. As to quaternary structure, homodimer.

It carries out the reaction N(1)-(5-phospho-beta-D-ribosyl)glycinamide + formate + ATP = N(2)-formyl-N(1)-(5-phospho-beta-D-ribosyl)glycinamide + ADP + phosphate + H(+). The protein operates within purine metabolism; IMP biosynthesis via de novo pathway; N(2)-formyl-N(1)-(5-phospho-D-ribosyl)glycinamide from N(1)-(5-phospho-D-ribosyl)glycinamide (formate route): step 1/1. Functionally, involved in the de novo purine biosynthesis. Catalyzes the transfer of formate to 5-phospho-ribosyl-glycinamide (GAR), producing 5-phospho-ribosyl-N-formylglycinamide (FGAR). Formate is provided by PurU via hydrolysis of 10-formyl-tetrahydrofolate. The chain is Formate-dependent phosphoribosylglycinamide formyltransferase from Shewanella oneidensis (strain ATCC 700550 / JCM 31522 / CIP 106686 / LMG 19005 / NCIMB 14063 / MR-1).